The following is a 332-amino-acid chain: Autoinducer 2 import system permease protein LsrD (332 aa).

A run of 10 helical transmembrane segments spans residues 7-27 (YSWEIALAALLIFEILAFGLI), 45-65 (ICIGIVALPLTMVIVSGGMDI), 70-90 (TIGLCAITLGVLFQLGMPLPL), 91-111 (AIIITLLLGAICGLINAGLII), 118-138 (LVITLGTMYLFGGSALLLSGM), 162-182 (FLGIPMPLIFFLVCCLFFWLL), 216-236 (VYAMTGCASAIAAVLLVSYFG), 240-260 (SDLGASFLMPTITAVVLGGAN), 261-281 (IYGGSGSIMGSALAALLVGFL), and 288-308 (AGVPNQISSALSGALLIVVVV).

Belongs to the binding-protein-dependent transport system permease family. AraH/RbsC subfamily. In terms of assembly, the complex is composed of two ATP-binding proteins (LsrA), two transmembrane proteins (LsrC and LsrD) and a solute-binding protein (LsrB).

It localises to the cell inner membrane. Functionally, part of the ABC transporter complex LsrABCD involved in autoinducer 2 (AI-2) import. Probably responsible for the translocation of the substrate across the membrane. The polypeptide is Autoinducer 2 import system permease protein LsrD (lsrD) (Salmonella typhi).